Here is a 415-residue protein sequence, read N- to C-terminus: MFERSRYTIDQIDPEIFAAIQKENQRQEDHIELIASENYTSPAVMAAQGSQLTNKYAEGYPGKRYYGGCEYVDVVEQLAIDRVKQLFGAEAANVQPNSGSQANQGVFFAVLKPGDTIMGMSLAEGGHLTHGMALNMSGKWFNVVSYGLNAQEDIDYDALEALAQEKKPKLIIAGASAFALRIDFERIGKIAKSIGAYFMVDMAHYAGLIAAGVYPNPVPHADFVTTTTHKSLRGPRGGVILMKAEHEKAINSAIFPGIQGGPLMHVIAGKAVAFKEALSPEFKAYQEQVVKNAAAMAETLMARGLRIVSGRTESHVMLVDLRAKKITGKEAEKVLGDAHITVNKNAIPNDPEKPFVTSGVRLGSPAMTTRGFKEAEAVKVAHLIADVLDNPHDEANIAAVRAKVAELTKQFPVYG.

Residues Leu122 and 126–128 (GHL) contribute to the (6S)-5,6,7,8-tetrahydrofolate site. Lys230 bears the N6-(pyridoxal phosphate)lysine mark.

It belongs to the SHMT family. As to quaternary structure, homodimer. Requires pyridoxal 5'-phosphate as cofactor.

It localises to the cytoplasm. It catalyses the reaction (6R)-5,10-methylene-5,6,7,8-tetrahydrofolate + glycine + H2O = (6S)-5,6,7,8-tetrahydrofolate + L-serine. It functions in the pathway one-carbon metabolism; tetrahydrofolate interconversion. It participates in amino-acid biosynthesis; glycine biosynthesis; glycine from L-serine: step 1/1. Its function is as follows. Catalyzes the reversible interconversion of serine and glycine with tetrahydrofolate (THF) serving as the one-carbon carrier. This reaction serves as the major source of one-carbon groups required for the biosynthesis of purines, thymidylate, methionine, and other important biomolecules. Also exhibits THF-independent aldolase activity toward beta-hydroxyamino acids, producing glycine and aldehydes, via a retro-aldol mechanism. The protein is Serine hydroxymethyltransferase of Ralstonia pickettii (strain 12J).